The following is a 396-amino-acid chain: Elongation factor Tu 1 (396 aa).

The 197-residue stretch at 10-206 (KPHVNVGTIG…ALDSYIPLPE (197 aa)) folds into the tr-type G domain. The G1 stretch occupies residues 19–26 (GHVDHGKT). Residue 19–26 (GHVDHGKT) coordinates GTP. Position 26 (Thr26) interacts with Mg(2+). A G2 region spans residues 60–64 (GITIN). The interval 81–84 (DCPG) is G3. GTP contacts are provided by residues 81–85 (DCPGH) and 136–139 (NKCD). The interval 136–139 (NKCD) is G4. Residues 174 to 176 (SAK) are G5.

Belongs to the TRAFAC class translation factor GTPase superfamily. Classic translation factor GTPase family. EF-Tu/EF-1A subfamily. As to quaternary structure, monomer.

It localises to the cytoplasm. It catalyses the reaction GTP + H2O = GDP + phosphate + H(+). Its function is as follows. GTP hydrolase that promotes the GTP-dependent binding of aminoacyl-tRNA to the A-site of ribosomes during protein biosynthesis. In Albidiferax ferrireducens (strain ATCC BAA-621 / DSM 15236 / T118) (Rhodoferax ferrireducens), this protein is Elongation factor Tu 1.